The primary structure comprises 953 residues: Probable isoleucine--tRNA ligase, cytoplasmic (953 aa).

Residues 45 to 55 (PFATGLPHYGH) carry the 'HIGH' region motif. The short motif at 634–638 (KMSKR) is the 'KMSKS' region element. Lys-637 contributes to the ATP binding site.

Belongs to the class-I aminoacyl-tRNA synthetase family.

The protein resides in the cytoplasm. It catalyses the reaction tRNA(Ile) + L-isoleucine + ATP = L-isoleucyl-tRNA(Ile) + AMP + diphosphate. This Enterocytozoon bieneusi (strain H348) (Microsporidian parasite) protein is Probable isoleucine--tRNA ligase, cytoplasmic.